We begin with the raw amino-acid sequence, 649 residues long: Transmembrane and coiled-coil domains protein 1 (649 aa).

Met1 carries the post-translational modification N-acetylmethionine. Disordered stretches follow at residues 1-37 (MEPS…LSKM), 58-83 (HQRR…EVDL), 110-166 (RVPP…PTSS), and 197-222 (LAQT…GIPD). The Cytoplasmic portion of the chain corresponds to 1-587 (MEPSGSEQLY…ARNLLGKLIN (587 aa)). Basic and acidic residues predominate over residues 20 to 34 (QDAEARRQTESEQKL). Polar residues predominate over residues 64–75 (SVSPHDVQQIQT). A compositionally biased stretch (basic residues) spans 113–125 (PKMKRGTSLHSRR). A compositionally biased stretch (low complexity) spans 156–166 (SSSTTDAPTSS). Positions 197-214 (LAQTSSAVASSTDGSIHT) are enriched in polar residues. Residues 224–310 (QRTKAAIAHL…KLREVEQNGI (87 aa)) adopt a coiled-coil conformation. A phosphoserine mark is found at Ser378 and Ser410. Positions 411–433 (PKYGSEEDCSSATSGSVGANSTT) are disordered. Residues 420–433 (SSATSGSVGANSTT) show a composition bias toward polar residues. Residues 457-566 (ALLHEVQEIR…KMELQQQQQQ (110 aa)) are a coiled coil. Transmembrane regions (helical) follow at residues 588–608 (ILLA…NCVV) and 621–641 (LFLV…FSYV). The Cytoplasmic portion of the chain corresponds to 642-649 (DRLFSPPR).

The protein belongs to the TEX28 family. May form homodimers and heterodimers with TMCC2 or TMCC3 via the coiled-coil domains. Interacts with ribosomal proteins RPL4 and RPS6.

It localises to the endoplasmic reticulum membrane. In terms of biological role, endoplasmic reticulum membrane protein that promotes endoplasmic reticulum-associated endosome fission. Localizes to contact sites between the endoplasmic reticulum and endosomes and acts by promoting recruitment of the endoplasmic reticulum to endosome tubules for fission. Endosome membrane fission of early and late endosomes is essential to separate regions destined for lysosomal degradation from carriers to be recycled to the plasma membrane. The chain is Transmembrane and coiled-coil domains protein 1 (Tmcc1) from Mus musculus (Mouse).